A 231-amino-acid polypeptide reads, in one-letter code: Enolase-phosphatase E1 (231 aa).

The Mg(2+) site is built by Asp11 and Glu13. Substrate is bound by residues 125–126 (SS) and Lys162. Asp188 is a Mg(2+) binding site.

It belongs to the HAD-like hydrolase superfamily. MasA/MtnC family. Monomer. It depends on Mg(2+) as a cofactor.

Its subcellular location is the cytoplasm. It localises to the nucleus. The catalysed reaction is 5-methylsulfanyl-2,3-dioxopentyl phosphate + H2O = 1,2-dihydroxy-5-(methylsulfanyl)pent-1-en-3-one + phosphate. It participates in amino-acid biosynthesis; L-methionine biosynthesis via salvage pathway; L-methionine from S-methyl-5-thio-alpha-D-ribose 1-phosphate: step 3/6. The protein operates within amino-acid biosynthesis; L-methionine biosynthesis via salvage pathway; L-methionine from S-methyl-5-thio-alpha-D-ribose 1-phosphate: step 4/6. Its function is as follows. Bifunctional enzyme that catalyzes the enolization of 2,3-diketo-5-methylthiopentyl-1-phosphate (DK-MTP-1-P) into the intermediate 2-hydroxy-3-keto-5-methylthiopentenyl-1-phosphate (HK-MTPenyl-1-P), which is then dephosphorylated to form the acireductone 1,2-dihydroxy-3-keto-5-methylthiopentene (DHK-MTPene). The protein is Enolase-phosphatase E1 of Pyricularia oryzae (strain 70-15 / ATCC MYA-4617 / FGSC 8958) (Rice blast fungus).